A 72-amino-acid polypeptide reads, in one-letter code: DNA-directed RNA polymerase subunit omega (72 aa).

Belongs to the RNA polymerase subunit omega family. The RNAP catalytic core consists of 2 alpha, 1 beta, 1 beta' and 1 omega subunit. When a sigma factor is associated with the core the holoenzyme is formed, which can initiate transcription.

The enzyme catalyses RNA(n) + a ribonucleoside 5'-triphosphate = RNA(n+1) + diphosphate. Its function is as follows. Promotes RNA polymerase assembly. Latches the N- and C-terminal regions of the beta' subunit thereby facilitating its interaction with the beta and alpha subunits. The protein is DNA-directed RNA polymerase subunit omega of Francisella tularensis subsp. tularensis (strain FSC 198).